Here is a 371-residue protein sequence, read N- to C-terminus: Protein maelstrom 1 (371 aa).

A DNA-binding region (HMG box) is located at residues 2–68; that stretch reads AQNKPNAFMA…VLERESKTER (67 aa).

This sequence belongs to the maelstrom family.

Its subcellular location is the cytoplasm. It is found in the nucleus. Involved both in the piRNA and miRNA metabolic processes. As a component of the meiotic nuage, plays a central role during oogenesis by repressing transposable elements and preventing their mobilization, which is essential for the germline integrity. Repression of transposable elements is mediated via the piRNA metabolic process, which mediates the repression of transposable elements during meiosis by forming complexes composed of piRNAs and Piwi proteins and governs the repression of transposons. As a nuclear component, it is required for proper differentiation in the germline stem cell (GSC) lineage by repressing microRNA-7 (miR-7), thereby acting as an indirect regulator of bag-of-marbles (Bam). Acts by binding to the promoter of miR-7 gene and repressing its expression; miR-7 repression alleviates the Bam repression by miR-7, thereby allowing differentiation in the germline stem cell (GSC) lineage. This is Protein maelstrom 1 (mael1) from Drosophila pseudoobscura pseudoobscura (Fruit fly).